The sequence spans 429 residues: 3-phosphoshikimate 1-carboxyvinyltransferase (429 aa).

Residues Lys-11, Ser-12, and Arg-16 each coordinate 3-phosphoshikimate. Lys-11 contacts phosphoenolpyruvate. Gly-82 and Arg-110 together coordinate phosphoenolpyruvate. The 3-phosphoshikimate site is built by Ser-155, Gln-157, Asp-302, and Lys-329. Gln-157 contributes to the phosphoenolpyruvate binding site. Asp-302 functions as the Proton acceptor in the catalytic mechanism. Residues Arg-333 and Arg-385 each coordinate phosphoenolpyruvate.

It belongs to the EPSP synthase family. In terms of assembly, monomer.

It is found in the cytoplasm. The enzyme catalyses 3-phosphoshikimate + phosphoenolpyruvate = 5-O-(1-carboxyvinyl)-3-phosphoshikimate + phosphate. It functions in the pathway metabolic intermediate biosynthesis; chorismate biosynthesis; chorismate from D-erythrose 4-phosphate and phosphoenolpyruvate: step 6/7. In terms of biological role, catalyzes the transfer of the enolpyruvyl moiety of phosphoenolpyruvate (PEP) to the 5-hydroxyl of shikimate-3-phosphate (S3P) to produce enolpyruvyl shikimate-3-phosphate and inorganic phosphate. The protein is 3-phosphoshikimate 1-carboxyvinyltransferase of Helicobacter pylori (strain J99 / ATCC 700824) (Campylobacter pylori J99).